The primary structure comprises 177 residues: Transcription antitermination protein NusB (177 aa).

Residues 1-36 (MTEQPTKPTGSRPPRQPRTGLTSTGARKAGSKSDRS) form a disordered region.

It belongs to the NusB family.

Its function is as follows. Involved in transcription antitermination. Required for transcription of ribosomal RNA (rRNA) genes. Binds specifically to the boxA antiterminator sequence of the ribosomal RNA (rrn) operons. The chain is Transcription antitermination protein NusB from Albidiferax ferrireducens (strain ATCC BAA-621 / DSM 15236 / T118) (Rhodoferax ferrireducens).